Here is a 423-residue protein sequence, read N- to C-terminus: Tegument protein UL43 (423 aa).

Polar residues predominate over residues 1-12 (MEKTPAETTAVS). A disordered region spans residues 1–46 (MEKTPAETTAVSAGNVPRDSIPCITNVSADTRGRTRPSRPATVPQR).

Belongs to the herpesviridae US22 family.

Its subcellular location is the virion tegument. This is Tegument protein UL43 (UL43) from Homo sapiens (Human).